Here is a 195-residue protein sequence, read N- to C-terminus: Peptide deformylase (195 aa).

The Fe cation site is built by Cys102 and His144. Residue Glu145 is part of the active site. His148 lines the Fe cation pocket.

Belongs to the polypeptide deformylase family. Requires Fe(2+) as cofactor.

The catalysed reaction is N-terminal N-formyl-L-methionyl-[peptide] + H2O = N-terminal L-methionyl-[peptide] + formate. Removes the formyl group from the N-terminal Met of newly synthesized proteins. Requires at least a dipeptide for an efficient rate of reaction. N-terminal L-methionine is a prerequisite for activity but the enzyme has broad specificity at other positions. The chain is Peptide deformylase from Salinibacter ruber (strain DSM 13855 / M31).